Here is a 418-residue protein sequence, read N- to C-terminus: Thyroid hormone receptor alpha-B (418 aa).

The tract at residues 1–40 is disordered; the sequence is MDQNLSGLDCLSEPDEKRWPDGKRKRKNSQCMGKSGMSGD. Positions 1–60 are modulating; sequence MDQNLSGLDCLSEPDEKRWPDGKRKRKNSQCMGKSGMSGDSLVSLPPAGYIPSYLDKDEP. NR C4-type zinc fingers lie at residues 61-81 and 99-123; these read CVVCSDKATGYHYRCITCEGC and CKYDGCCIIDKITRNQCQLCRFKKC. A DNA-binding region (nuclear receptor) is located at residues 61 to 128; the sequence is CVVCSDKATG…RFKKCIAVGM (68 aa). The NR LBD domain occupies 171–415; the sequence is EEWELIRIVT…PPLFLEVFED (245 aa).

This sequence belongs to the nuclear hormone receptor family. NR1 subfamily. In terms of assembly, binds to thyroid hormone receptor element (TRE) weakly as homodimers and monomers, but binds TRE with much higher affinity as heterodimers with retinoid X receptors. Can bind DNA as a heterodimer with either rxra or rxrg.

It localises to the nucleus. High affinity receptor for triiodothyronine (T3). The chain is Thyroid hormone receptor alpha-B (thra-b) from Xenopus laevis (African clawed frog).